The following is a 2324-amino-acid chain: Myomegalin (2324 aa).

4 coiled-coil regions span residues 41 to 132, 158 to 205, 238 to 288, and 348 to 638; these read REDV…LVEA, QVKL…LLEE, DSHL…SLKE, and LFCS…NKQA. 2 disordered regions span residues 72–96 and 205–240; these read TWAD…EPQQ and EPGG…SDSH. A compositionally biased stretch (basic and acidic residues) spans 85–96; that stretch reads AELRRQVEEPQQ. Positions 219–238 are enriched in polar residues; it reads PTQQKPDLNETPTTQPSVSD. Residues 701 to 747 form a disordered region; sequence PAGATSVGPHHGEQTDQGSTQMPSRDDSTSLTAREEASIPRSTLGDS. Thr705 carries the phosphothreonine modification. Residues 724–738 are compositionally biased toward basic and acidic residues; sequence SRDDSTSLTAREEAS. 3 coiled-coil regions span residues 745 to 822, 855 to 923, and 1011 to 1043; these read GDSD…QLVD, ENRR…EEVL, and LRAE…GFSS. Disordered regions lie at residues 1155-1182 and 1195-1216; these read LPSS…SLKL and NKSQ…STKH. Coiled-coil stretches lie at residues 1213 to 1241, 1346 to 1384, and 1430 to 1455; these read STKH…SEAT, TSDD…LSAT, and GLQA…PKTG. 6 disordered regions span residues 1540 to 1559, 1589 to 1610, 1628 to 1685, 1742 to 1773, 1857 to 1877, and 2081 to 2140; these read TDRL…KEEA, RFSS…SSTS, YTHY…IPKP, APPT…SPAR, LSST…GLES, and NQQP…TPPK. An Olduvai domain is found at 1550-1641; the sequence is KDHKSEKEEA…EEKKPSPSNS (92 aa). 2 stretches are compositionally biased toward low complexity: residues 1591-1610 and 1637-1646; these read SSPP…SSTS and SPSNSAASAS. Polar residues predominate over residues 1743 to 1767; the sequence is PPTSTSTLLSNHTEASSPRYSNPAQ. A coiled-coil region spans residues 1821–2056; it reads GADLLEEHLG…LRLQLEQQMD (236 aa). Composition is skewed to polar residues over residues 2081-2090 and 2108-2135; these read NQQPPFQGSA and PSNS…SAAT. Residues 2248–2274 adopt a coiled-coil conformation; it reads EEGNLMEKELLDLRAQVSQQQQLLQST.

In terms of assembly, interacts with PDE4D. May interact with MAPRE1 and MAPRE3. May form a pericentrosomal complex with AKAP9, CDK5RAP2 and EB1/MAPRE1 in an isoform-specific manner; within this complex, may mediate MAPRE1-binding to CDK5RAP2. Interaction with AKAP9 stabilizes both proteins. May interact with CAMSAP2 in an isoform-specific manner; this interaction is much stronger in the presence of AKAP9. In complex with AKAP9, recruits CAMSAP2 to the Golgi apparatus. May interact with unglycosylated LGALS3BP in an isoform-specific manner; this interaction may connect the pericentrosomal complex to the gamma-tubulin ring complex (gamma-TuRC) to promote microtubule assembly and acetylation. In terms of tissue distribution, abundantly expressed in heart and skeletal muscle and to a lower extent in brain, lung and liver. Expressed in heart, skeletal muscle and testis (at protein level).

Its subcellular location is the cytoplasm. The protein resides in the cytoskeleton. The protein localises to the microtubule organizing center. It is found in the centrosome. It localises to the golgi apparatus. Functions as an anchor sequestering components of the cAMP-dependent pathway to Golgi and/or centrosomes. May participate in microtubule dynamics, promoting microtubule assembly, in an isoform-specific manner. Depending upon the cell context, may act at the level of the Golgi apparatus or that of the centrosome. In complex with AKAP9, recruits CAMSAP2 to the Golgi apparatus and tethers non-centrosomal minus-end microtubules to the Golgi, an important step for polarized cell movement. In complex with AKAP9, EB1/MAPRE1 and CDK5RAP2, contributes to microtubules nucleation and extension from the centrosome to the cell periphery, a crucial process for directed cell migration, mitotic spindle orientation and cell-cycle progression. The protein is Myomegalin (Pde4dip) of Rattus norvegicus (Rat).